Here is a 259-residue protein sequence, read N- to C-terminus: Pimeloyl-[acyl-carrier protein] methyl ester esterase (259 aa).

Substrate is bound by residues W18, 78 to 79 (SL), and 139 to 143 (FLALD). S78 functions as the Nucleophile in the catalytic mechanism. Catalysis depends on residues D203 and H231. H231 is a binding site for substrate.

Belongs to the AB hydrolase superfamily. Carboxylesterase BioH family. In terms of assembly, monomer.

Its subcellular location is the cytoplasm. The enzyme catalyses 6-carboxyhexanoyl-[ACP] methyl ester + H2O = 6-carboxyhexanoyl-[ACP] + methanol + H(+). Its pathway is cofactor biosynthesis; biotin biosynthesis. In terms of biological role, the physiological role of BioH is to remove the methyl group introduced by BioC when the pimeloyl moiety is complete. It allows to synthesize pimeloyl-ACP via the fatty acid synthetic pathway through the hydrolysis of the ester bonds of pimeloyl-ACP esters. The protein is Pimeloyl-[acyl-carrier protein] methyl ester esterase of Stenotrophomonas maltophilia (strain R551-3).